Reading from the N-terminus, the 562-residue chain is Glycine betaine/proline/choline/ectoine transporter VP1456 (562 aa).

A run of 12 helical transmembrane segments spans residues 68–88 (PVFGISAGLVVFCLISLLLVE), 110–130 (FFMWSTNFFLLFAVGLLFSPL), 147–167 (VSWLSMLFAAGMGIGLLFWSV), 203–223 (WGVHGWSIYALVALALAFFAF), 243–263 (AWGWLGHVIDILAVLSTLFGL), 287–307 (GIGTQMVVIAFVTFIAVLSVV), 322–342 (MIVAFALLIFITFITFDTAMG), 373–393 (WTVFYWAWWVSWSPFVGMFIA), 404–424 (FLFAVIVIPTLVTLVWMSVFG), 456–476 (VLPYSSVISILSIVLILVFFI), 503–523 (IFWACIEGSIAAVMLWVGGKE), and 531–551 (GVVATGLPFTFVLLLMCVSLV).

This sequence belongs to the BCCT transporter (TC 2.A.15) family.

The protein resides in the cell inner membrane. Involved in the uptake of osmoprotectants. Can transport glycine betaine, proline, choline and ectoine. The protein is Glycine betaine/proline/choline/ectoine transporter VP1456 of Vibrio parahaemolyticus serotype O3:K6 (strain RIMD 2210633).